The primary structure comprises 258 residues: MLSRRIIPCLDVRDGRVVKGVRFRDHVDMGDIAELAQRYRDQGADELVFYDIGASPEARSVDVAWIERIARLIDIPFCVAGGIDSVETARRVLFAGADKVSINSPALGRPELITELADEFGVQCVVVGVDSVRETDGQWRVRRFSGDPDKTQAVPLRTLDWIVEAQRRGAGEIVLNCMDSDGVRRGYDVVQLQQARALCQVPLIASGGAGAMEHFAEAFDQADVDGALAASVFHSGAIAIPELKRYLRGQQIEVRDVY.

Active-site residues include aspartate 11 and aspartate 130.

The protein belongs to the HisA/HisF family. As to quaternary structure, heterodimer of HisH and HisF.

Its subcellular location is the cytoplasm. It carries out the reaction 5-[(5-phospho-1-deoxy-D-ribulos-1-ylimino)methylamino]-1-(5-phospho-beta-D-ribosyl)imidazole-4-carboxamide + L-glutamine = D-erythro-1-(imidazol-4-yl)glycerol 3-phosphate + 5-amino-1-(5-phospho-beta-D-ribosyl)imidazole-4-carboxamide + L-glutamate + H(+). It functions in the pathway amino-acid biosynthesis; L-histidine biosynthesis; L-histidine from 5-phospho-alpha-D-ribose 1-diphosphate: step 5/9. IGPS catalyzes the conversion of PRFAR and glutamine to IGP, AICAR and glutamate. The HisF subunit catalyzes the cyclization activity that produces IGP and AICAR from PRFAR using the ammonia provided by the HisH subunit. In Stenotrophomonas maltophilia (strain K279a), this protein is Imidazole glycerol phosphate synthase subunit HisF.